The sequence spans 185 residues: Ribosome-recycling factor (185 aa).

This sequence belongs to the RRF family.

The protein resides in the cytoplasm. Functionally, responsible for the release of ribosomes from messenger RNA at the termination of protein biosynthesis. May increase the efficiency of translation by recycling ribosomes from one round of translation to another. The sequence is that of Ribosome-recycling factor from Clostridium botulinum (strain Eklund 17B / Type B).